The sequence spans 219 residues: Imidazole glycerol phosphate synthase subunit HisH (219 aa).

One can recognise a Glutamine amidotransferase type-1 domain in the interval 2 to 218; that stretch reads KVVVIDSGTG…MVWTPEGTSG (217 aa). Cysteine 87 functions as the Nucleophile in the catalytic mechanism. Catalysis depends on residues histidine 193 and glutamate 195.

As to quaternary structure, heterodimer of HisH and HisF.

It localises to the cytoplasm. The enzyme catalyses 5-[(5-phospho-1-deoxy-D-ribulos-1-ylimino)methylamino]-1-(5-phospho-beta-D-ribosyl)imidazole-4-carboxamide + L-glutamine = D-erythro-1-(imidazol-4-yl)glycerol 3-phosphate + 5-amino-1-(5-phospho-beta-D-ribosyl)imidazole-4-carboxamide + L-glutamate + H(+). It catalyses the reaction L-glutamine + H2O = L-glutamate + NH4(+). The protein operates within amino-acid biosynthesis; L-histidine biosynthesis; L-histidine from 5-phospho-alpha-D-ribose 1-diphosphate: step 5/9. IGPS catalyzes the conversion of PRFAR and glutamine to IGP, AICAR and glutamate. The HisH subunit catalyzes the hydrolysis of glutamine to glutamate and ammonia as part of the synthesis of IGP and AICAR. The resulting ammonia molecule is channeled to the active site of HisF. This is Imidazole glycerol phosphate synthase subunit HisH from Granulibacter bethesdensis (strain ATCC BAA-1260 / CGDNIH1).